Reading from the N-terminus, the 564-residue chain is MGQSQDNTQLTTASPQAEKDLSSNDNPPESEPAAPKKGARFWLVFIAIALTTFLAALDTSIISTALPTITSDLGSNSLYVWIVDSYLLASTATIPIFAQAANIYGRRSLTLIAVCLFTLGSGLCGGAHNTAMMIGGRSVQGVGGGGILTMSEIVVCDMVSVRERGMYAGIIGGVWAIASVIAPIMGGAFAQNVSWRWIFYINLPIAGVVLVALIVFLKLARPPTGTFKEQMSRIDWGGSVLLIASVTAVVLALSWGGSEHPWSSWRTLVPLILGLVGQLAFFAYQGAPWLKEPTMPLRLFGNRTSSTLFVISFVHSMLLFWVCYFLPVYFQAVKEASPARSAVMLFPIATTSAPGGVIAGIFITKTGKYRVWHFVGFALMSISCGLFTLLDDKSSIGRWVGFQLLFGFGTGFVFTSCLPPILASLPDSDVATATGAWTFLRNFGSIWGIAIPAAAFNTRVNSSLDKVSSGTVRDMLVNGGAYEHATKTFIQAFNNTPRLKAEIVQVYMDGLKLVWQVSIAFSVLGFVLAFLVKSLTLRDELNTEYGLEEKDTSKEKSSEEGNAS.

Polar residues predominate over residues 1-15 (MGQSQDNTQLTTASP). The tract at residues 1-35 (MGQSQDNTQLTTASPQAEKDLSSNDNPPESEPAAP) is disordered. The next 5 membrane-spanning stretches (helical) occupy residues 42 to 62 (WLVF…TSII), 78 to 98 (LYVW…PIFA), 108 to 128 (SLTL…GGAH), 141 to 161 (GVGG…MVSV), and 170 to 190 (IIGG…GAFA). N192 carries N-linked (GlcNAc...) asparagine glycosylation. The next 3 helical transmembrane spans lie at 197-217 (WIFY…IVFL), 236-256 (WGGS…LSWG), and 268-288 (LVPL…QGAP). An N-linked (GlcNAc...) asparagine glycan is attached at N302. A run of 5 helical transmembrane segments spans residues 308–328 (LFVI…FLPV), 343–363 (VMLF…GIFI), 371–391 (VWHF…TLLD), 404–424 (LLFG…ILAS), and 436–456 (AWTF…AAAF). Residue N461 is glycosylated (N-linked (GlcNAc...) asparagine). The helical transmembrane segment at 512–532 (KLVWQVSIAFSVLGFVLAFLV) threads the bilayer.

This sequence belongs to the major facilitator superfamily. TCR/Tet family.

The protein localises to the membrane. MFS-type efflux pump; part of the gene cluster that mediates the biosynthesis of the mycotoxin lucilactaene and the lucilactaene-related compound NG-391 that act as cell cycle inhibitors with potent growth inhibitory activity against malarial parasites, moderate growth inhibitory activity against cancer cells, and no activity against bacteria and fungi. The protein is MFS-type efflux pump LUC4 of Fusarium sp.